Consider the following 311-residue polypeptide: tRNA dimethylallyltransferase (311 aa).

Residue 10–17 coordinates ATP; the sequence is GPTAVGKT. Substrate is bound at residue 12–17; the sequence is TAVGKT. The segment at 35-38 is interaction with substrate tRNA; that stretch reads DSMQ.

The protein belongs to the IPP transferase family. Monomer. The cofactor is Mg(2+).

It catalyses the reaction adenosine(37) in tRNA + dimethylallyl diphosphate = N(6)-dimethylallyladenosine(37) in tRNA + diphosphate. Its function is as follows. Catalyzes the transfer of a dimethylallyl group onto the adenine at position 37 in tRNAs that read codons beginning with uridine, leading to the formation of N6-(dimethylallyl)adenosine (i(6)A). The polypeptide is tRNA dimethylallyltransferase (Anoxybacillus flavithermus (strain DSM 21510 / WK1)).